Here is a 473-residue protein sequence, read N- to C-terminus: Xylosidase/arabinosidase (473 aa).

The Proton acceptor role is filled by Asp18. The Proton donor role is filled by Glu209.

This sequence belongs to the glycosyl hydrolase 43 family. As to quaternary structure, homotetramer.

The enzyme catalyses Hydrolysis of (1-&gt;4)-beta-D-xylans, to remove successive D-xylose residues from the non-reducing termini.. It carries out the reaction Hydrolysis of terminal non-reducing alpha-L-arabinofuranoside residues in alpha-L-arabinosides.. The protein is Xylosidase/arabinosidase (xylA) of Thermoclostridium stercorarium (Clostridium stercorarium).